Here is a 239-residue protein sequence, read N- to C-terminus: Ribosomal RNA small subunit methyltransferase G (239 aa).

S-adenosyl-L-methionine is bound by residues Gly78, Phe83, 129-130, and Arg148; that span reads AE.

The protein belongs to the methyltransferase superfamily. RNA methyltransferase RsmG family.

It is found in the cytoplasm. Its function is as follows. Specifically methylates the N7 position of a guanine in 16S rRNA. In Clostridium botulinum (strain Alaska E43 / Type E3), this protein is Ribosomal RNA small subunit methyltransferase G.